A 623-amino-acid chain; its full sequence is tRNA uridine 5-carboxymethylaminomethyl modification enzyme MnmG (623 aa).

FAD is bound by residues 11 to 16 (GAGHAG), valine 123, and serine 178. 270–284 (GPRYCPSIETKIVTF) provides a ligand contact to NAD(+). Glutamine 367 lines the FAD pocket.

This sequence belongs to the MnmG family. In terms of assembly, homodimer. Heterotetramer of two MnmE and two MnmG subunits. It depends on FAD as a cofactor.

It localises to the cytoplasm. In terms of biological role, NAD-binding protein involved in the addition of a carboxymethylaminomethyl (cmnm) group at the wobble position (U34) of certain tRNAs, forming tRNA-cmnm(5)s(2)U34. The protein is tRNA uridine 5-carboxymethylaminomethyl modification enzyme MnmG of Phocaeicola vulgatus (strain ATCC 8482 / DSM 1447 / JCM 5826 / CCUG 4940 / NBRC 14291 / NCTC 11154) (Bacteroides vulgatus).